We begin with the raw amino-acid sequence, 332 residues long: MTRFLDSDAMGDEELVERTLRPQYLREYIGQDKVKDQLKIFIEAAKLRDESLDHVLLFGPPGLGKTTMAFVIANELGVNLKQTSGPAIEKSGDLVAILNDLEPGDVLFIDEIHRMPMAVEEVLYSAMEDFYIDIMIGAGETSRSVHLDLPPFTLIGATTRAGMLSNPLRARFGITGHMEYYEENDLTEIIERTADIFEMKITYEAASELARRSRGTPRIANRLLKRVRDYAQIMGDGLIDDNITDKALTMLDVDHEGLDYVDQKILRTMIEMYNGGPVGLGTLSVNIAEERDTVEDMYEPYLIQKGFIMRTRTGRVATDKAYEHLGYQRFDK.

The segment at 1-181 is large ATPase domain (RuvB-L); sequence MTRFLDSDAM…FGITGHMEYY (181 aa). ATP contacts are provided by residues leucine 20, arginine 21, glycine 62, lysine 65, threonine 66, threonine 67, 128–130, arginine 171, tyrosine 181, and arginine 218; that span reads EDF. Threonine 66 contributes to the Mg(2+) binding site. Residues 182–252 are small ATPAse domain (RuvB-S); sequence EENDLTEIIE…ITDKALTMLD (71 aa). The segment at 255–332 is head domain (RuvB-H); it reads HEGLDYVDQK…EHLGYQRFDK (78 aa). Residues arginine 291, arginine 310, arginine 312, and arginine 315 each coordinate DNA.

It belongs to the RuvB family. As to quaternary structure, homohexamer. Forms an RuvA(8)-RuvB(12)-Holliday junction (HJ) complex. HJ DNA is sandwiched between 2 RuvA tetramers; dsDNA enters through RuvA and exits via RuvB. An RuvB hexamer assembles on each DNA strand where it exits the tetramer. Each RuvB hexamer is contacted by two RuvA subunits (via domain III) on 2 adjacent RuvB subunits; this complex drives branch migration. In the full resolvosome a probable DNA-RuvA(4)-RuvB(12)-RuvC(2) complex forms which resolves the HJ.

It is found in the cytoplasm. It catalyses the reaction ATP + H2O = ADP + phosphate + H(+). In terms of biological role, the RuvA-RuvB-RuvC complex processes Holliday junction (HJ) DNA during genetic recombination and DNA repair, while the RuvA-RuvB complex plays an important role in the rescue of blocked DNA replication forks via replication fork reversal (RFR). RuvA specifically binds to HJ cruciform DNA, conferring on it an open structure. The RuvB hexamer acts as an ATP-dependent pump, pulling dsDNA into and through the RuvAB complex. RuvB forms 2 homohexamers on either side of HJ DNA bound by 1 or 2 RuvA tetramers; 4 subunits per hexamer contact DNA at a time. Coordinated motions by a converter formed by DNA-disengaged RuvB subunits stimulates ATP hydrolysis and nucleotide exchange. Immobilization of the converter enables RuvB to convert the ATP-contained energy into a lever motion, pulling 2 nucleotides of DNA out of the RuvA tetramer per ATP hydrolyzed, thus driving DNA branch migration. The RuvB motors rotate together with the DNA substrate, which together with the progressing nucleotide cycle form the mechanistic basis for DNA recombination by continuous HJ branch migration. Branch migration allows RuvC to scan DNA until it finds its consensus sequence, where it cleaves and resolves cruciform DNA. This chain is Holliday junction branch migration complex subunit RuvB, found in Streptococcus agalactiae serotype Ia (strain ATCC 27591 / A909 / CDC SS700).